The primary structure comprises 477 residues: MAPPPSLAPDRGGGEPDDALRLRARAAAAAGDAPAPQQQQEQRHQEQQQQLLWYRASAPAHRRVRESPLSSDAIFRQSHAGLLNLCIVVLVAVNSRLIIENLMKYGLLIRAGFWFSGTSLADWPLLMCCLTLPTFPLAALMVEKLAQRKLISKHVVILLHIVITTSVLVYPVVVILKCDSAVLSGFVLMFLASIIWLKLVSFAHTNYDIRMLSKSIEKGVTHDISIDPENIKWPTFKRLSYFMLAPTLCYQPSYPRTTYIRKGWVVRQLIKCLVFTGLMGFIIEQYINPIVKNSKHPLKGNFLNAIERVLKLSVPTLYVWLCMFYCFFHLWLNILAELLCFGDREFYKDWWNAKTVEEYWRMWNMPVHKWVIRHIYFPCIRNGFSKGVAILISFLVSAAFHELCVAVPCHIFKFWAFIGIMFQIPLVFLTKYLQDKFNNTMVGNMIFWFFFSILGQPMCVLLYYHDVMNRQQAQTNR.

The segment at 1-48 is disordered; the sequence is MAPPPSLAPDRGGGEPDDALRLRARAAAAAGDAPAPQQQQEQRHQEQQ. Residues 12-21 are compositionally biased toward basic and acidic residues; that stretch reads GGGEPDDALR. The segment covering 25–40 has biased composition (low complexity); that stretch reads RAAAAAGDAPAPQQQQ. Helical transmembrane passes span 79–99, 123–143, 155–175, 182–202, 230–250, 263–283, and 319–339; these read HAGL…RLII, WPLL…LMVE, VVIL…VVVI, VLSG…LVSF, NIKW…TLCY, GWVV…GFII, and VWLC…AELL. An FYXDWWN motif motif is present at residues 346–352; the sequence is FYKDWWN. A run of 3 helical transmembrane segments spans residues 387-407, 409-429, and 442-462; these read GVAI…CVAV, CHIF…LVFL, and VGNM…CVLL. His401 is a catalytic residue.

It belongs to the membrane-bound acyltransferase family. Sterol o-acyltransferase subfamily.

It is found in the endoplasmic reticulum membrane. The enzyme catalyses an acyl-CoA + a 1,2-diacyl-sn-glycerol = a triacyl-sn-glycerol + CoA. Its pathway is glycerolipid metabolism; triacylglycerol biosynthesis. Involved in triacylglycerol (TAG) synthesis. Catalyzes the acylation of the sn-3 hydroxy group of sn-1,2-diacylglycerol using acyl-CoA. The polypeptide is Diacylglycerol O-acyltransferase 1-2 (Oryza sativa subsp. japonica (Rice)).